A 1564-amino-acid chain; its full sequence is NACHT domain- and WD repeat-containing protein 1 (1564 aa).

The NACHT domain maps to 335–661 (TPLVLFGPPG…LLAIAHRQLV (327 aa)). 341-348 (GPPGIGKT) is a binding site for ATP. WD repeat units lie at residues 866-905 (GCHK…VIHM), 908-947 (GHTG…EKFT), 956-994 (PAEP…PVFH), 998-1037 (DASD…LQGK), 1044-1082 (KEET…LLEK), 1083-1121 (LPDA…RRFM), 1126-1165 (EHED…TLLD), 1167-1207 (LEGV…RSRV), 1212-1251 (LDRT…EQDS), 1253-1290 (DTSS…RQDV), 1291-1327 (ICIP…VLDI), 1338-1376 (GPRY…LYEC), 1380-1418 (KAFP…WDLQ), and 1425-1462 (EMSY…VWSV).

May interact with HSP90AA1, HSP90AB1 and BAG2. Expressed at highest levels in prostate, followed by testis, retina, trachea and optic nerve. Also detected in brain, epididymis, lung, vagina and pituitary. In the prostate, tends to be up-regulated during malignant progression compared to normal epithelium (at protein level).

Its subcellular location is the cytoplasm. It is found in the cytosol. In terms of biological role, may play a role in the control of androgen receptor (AR) protein steady-state levels. The polypeptide is NACHT domain- and WD repeat-containing protein 1 (NWD1) (Homo sapiens (Human)).